Reading from the N-terminus, the 568-residue chain is K(+) efflux antiporter 5 (568 aa).

The signal sequence occupies residues 1-20 (MARFAVIGLTFLLLLGTSLS). Residues 59-78 (EFSENDSPEGSDGASFNSSV) are disordered. The next 12 helical transmembrane spans lie at 154–174 (LISDLVVIIVFAAIGGIVFSC), 178–198 (PVIVGYLLAGSIIGPGGLKFI), 201–221 (MVQVETVAQFGVVFLLFALGL), 230–250 (VVGPVAVLGGLLQIVLLMFLC), 264–284 (GIFVGAFLSMSSTAVVVKFLV), 298–318 (IGILIFQDCVVGLLFALLPVL), 334–354 (LLLILSIYLTVASLLTWSFVP), 389–409 (LGLSLELGSFVAGVMLSTTEF), 422–442 (NLFAALFLSSIGMLINVHFLW), 447–467 (ILLASVILVIVIKTAIAAVVV), 476–496 (ISFHVGVLLAQIGEFAFVLLS), and 510–530 (LLLLGTTALSLVTTPLLFKLI).

The protein belongs to the monovalent cation:proton antiporter 2 (CPA2) transporter (TC 2.A.37) family. KEA (TC 2.A.37.1) subfamily. In terms of tissue distribution, expressed in roots, stems, leaves, flowers and silique.

The protein localises to the golgi apparatus membrane. The protein resides in the golgi apparatus. It localises to the trans-Golgi network membrane. It is found in the prevacuolar compartment membrane. Its subcellular location is the endomembrane system. The enzyme catalyses K(+)(in) + H(+)(out) = K(+)(out) + H(+)(in). Electroneutral K(+)/H(+) efflux antiporter involved in K(+) homeostasis and osmotic adjustment. Together with KEA4 and KEA6, promotes growth and development, and facilitates endosomal pH and ions homeostasis, as well as salt tolerance (e.g. K(+), NaCl and LiCl), probably by supporting cell wall biosynthesis during rapid etiolated seedling growth. The chain is K(+) efflux antiporter 5 from Arabidopsis thaliana (Mouse-ear cress).